We begin with the raw amino-acid sequence, 181 residues long: MNLEEKPTMTASRASPQAEHLYYVRCSICNTILAVGIPLKRMLDTVTVKCGHCGNLSFLTTTPPLQGHVSLTLQMQSFGGSDYKKGSSSSSSSSTSSDQPPSPSPPFVVKPPEKKQRLPSAYNRFMRDEIQRIKSANPEIPHREAFSAAAKNWAKYIPNSPTSITSGGHNMIHGLGFGEKK.

The C4-type zinc-finger motif lies at 26–53 (CSICNTILAVGIPLKRMLDTVTVKCGHC). The disordered stretch occupies residues 80–122 (GSDYKKGSSSSSSSSTSSDQPPSPSPPFVVKPPEKKQRLPSAY). Over residues 87–99 (SSSSSSSSTSSDQ) the composition is skewed to low complexity. Residues 100–109 (PPSPSPPFVV) are compositionally biased toward pro residues.

This sequence belongs to the YABBY family. In terms of tissue distribution, restricted to flowers, mostly in carpels and nectaries. Expressed at low levels in sepal primordia (buds), sepal receptacle and developing petal. Not detected in placental tissues, septum, stigma and ovules.

It is found in the nucleus. Its function is as follows. Transcription factor required for the initiation of nectary development. Also involved in suppressing early radial growth of the gynoecium, in promoting its later elongation and in fusion of its carpels by regulating both cell division and expansion. Establishes the polar differentiation in the carpels by specifying abaxial cell fate in the ovary wall. Regulates both cell division and expansion. The polypeptide is Protein CRABS CLAW (Arabidopsis thaliana (Mouse-ear cress)).